The sequence spans 351 residues: MTNSIRIGTRKSPLALIHTNLVIQQIKQFFPDINCEIVPIITSGDLIQNKPLYDIGGKALFLKEIEQALLDKKIDLAVHSLKDVPGRIPEPLVIAAVLEREDPRDVFVCLKYKSIEELPQNAVIGSSAVRRKAFIQKIRPDLKVTVFRGNVDSRIKKLMTGEVDATILAYTGLKRLEVFNPEYCHLIEYSQMLPCIGQGVIAVEIRKDDNAMLEICNQINHLPTFELIKPERAFLEYLDANCRTPIAAYSQYLDANPRHLSKLAYREVFEGNTEALATAAYKSNRTDASTGLTYKLPLEVEFGKMSNIQTNFMLGNLDGSKITFHTETTNIKTSTEAGIKAAKMMLEAICK.

An S-(dipyrrolylmethanemethyl)cysteine modification is found at cysteine 242.

This sequence belongs to the HMBS family. Monomer. The cofactor is dipyrromethane.

It catalyses the reaction 4 porphobilinogen + H2O = hydroxymethylbilane + 4 NH4(+). It participates in porphyrin-containing compound metabolism; protoporphyrin-IX biosynthesis; coproporphyrinogen-III from 5-aminolevulinate: step 2/4. In terms of biological role, tetrapolymerization of the monopyrrole PBG into the hydroxymethylbilane pre-uroporphyrinogen in several discrete steps. The polypeptide is Porphobilinogen deaminase (Rickettsia rickettsii (strain Sheila Smith)).